The chain runs to 263 residues: Small ribosomal subunit protein eS4 (263 aa).

The region spanning 42–104 (LPLIIFLRNR…TGEHFRLVYD (63 aa)) is the S4 RNA-binding domain.

Belongs to the eukaryotic ribosomal protein eS4 family. In terms of assembly, component of the small ribosomal subunit.

The protein localises to the cytoplasm. Functionally, component of the small ribosomal subunit. The ribosome is a large ribonucleoprotein complex responsible for the synthesis of proteins in the cell. This is Small ribosomal subunit protein eS4 (rps4) from Xenopus tropicalis (Western clawed frog).